Here is a 619-residue protein sequence, read N- to C-terminus: UvrABC system protein C (619 aa).

A GIY-YIG domain is found at 20 to 98 (TAPGVYRMYA…IKSLSPRYNV (79 aa)). Residues 207–242 (DQLGEEIMHSMQQASEALEFERAARLRDLLSSLRSM) enclose the UVR domain.

It belongs to the UvrC family. As to quaternary structure, interacts with UvrB in an incision complex.

The protein localises to the cytoplasm. The UvrABC repair system catalyzes the recognition and processing of DNA lesions. UvrC both incises the 5' and 3' sides of the lesion. The N-terminal half is responsible for the 3' incision and the C-terminal half is responsible for the 5' incision. This chain is UvrABC system protein C, found in Xanthomonas axonopodis pv. citri (strain 306).